We begin with the raw amino-acid sequence, 276 residues long: Digeranylgeranylglyceryl phosphate synthase (276 aa).

The next 5 membrane-spanning stretches (helical) occupy residues 14–34, 90–110, 144–164, 200–220, and 221–241; these read VNTL…GGAV, VVLF…AVCI, FVFG…AALA, ALAV…VPYL, and VGVF…VMVV.

It belongs to the UbiA prenyltransferase family. DGGGP synthase subfamily. Mg(2+) is required as a cofactor.

It localises to the cell membrane. The enzyme catalyses sn-3-O-(geranylgeranyl)glycerol 1-phosphate + (2E,6E,10E)-geranylgeranyl diphosphate = 2,3-bis-O-(geranylgeranyl)-sn-glycerol 1-phosphate + diphosphate. It participates in membrane lipid metabolism; glycerophospholipid metabolism. Its function is as follows. Prenyltransferase that catalyzes the transfer of the geranylgeranyl moiety of geranylgeranyl diphosphate (GGPP) to the C2 hydroxyl of (S)-3-O-geranylgeranylglyceryl phosphate (GGGP). This reaction is the second ether-bond-formation step in the biosynthesis of archaeal membrane lipids. The polypeptide is Digeranylgeranylglyceryl phosphate synthase (Halobacterium salinarum (strain ATCC 29341 / DSM 671 / R1)).